The sequence spans 185 residues: Elongation factor P (185 aa).

Belongs to the elongation factor P family.

The protein resides in the cytoplasm. It participates in protein biosynthesis; polypeptide chain elongation. Its function is as follows. Involved in peptide bond synthesis. Stimulates efficient translation and peptide-bond synthesis on native or reconstituted 70S ribosomes in vitro. Probably functions indirectly by altering the affinity of the ribosome for aminoacyl-tRNA, thus increasing their reactivity as acceptors for peptidyl transferase. In Clostridium botulinum (strain Alaska E43 / Type E3), this protein is Elongation factor P.